Reading from the N-terminus, the 288-residue chain is Transmembrane and coiled-coil domain-containing protein 5A (288 aa).

Residues 13-105 (IISLNMDLER…VHSISELQRK (93 aa)) are a coiled coil. Residues 227 to 249 (SLLFSTLFFIRLLGYLIFHLSFI) form a helical membrane-spanning segment.

As to expression, testis-specific. Expressed in spermatogenic cells of testis but disappear by the time mature spermatozoa are formed (at protein level).

It localises to the endoplasmic reticulum membrane. The protein resides in the nucleus membrane. The chain is Transmembrane and coiled-coil domain-containing protein 5A (Tmco5a) from Rattus norvegicus (Rat).